The chain runs to 419 residues: UDP-N-acetylglucosamine 1-carboxyvinyltransferase (419 aa).

22–23 (KN) provides a ligand contact to phosphoenolpyruvate. A UDP-N-acetyl-alpha-D-glucosamine-binding site is contributed by Arg95. The active-site Proton donor is the Cys119. 2-(S-cysteinyl)pyruvic acid O-phosphothioketal is present on Cys119. Residues 164 to 167 (KVSV), Asp308, and Ile330 contribute to the UDP-N-acetyl-alpha-D-glucosamine site.

This sequence belongs to the EPSP synthase family. MurA subfamily.

The protein resides in the cytoplasm. The catalysed reaction is phosphoenolpyruvate + UDP-N-acetyl-alpha-D-glucosamine = UDP-N-acetyl-3-O-(1-carboxyvinyl)-alpha-D-glucosamine + phosphate. The protein operates within cell wall biogenesis; peptidoglycan biosynthesis. Functionally, cell wall formation. Adds enolpyruvyl to UDP-N-acetylglucosamine. In Rickettsia canadensis (strain McKiel), this protein is UDP-N-acetylglucosamine 1-carboxyvinyltransferase.